A 135-amino-acid chain; its full sequence is Large ribosomal subunit protein uL16c (135 aa).

Belongs to the universal ribosomal protein uL16 family. In terms of assembly, part of the 50S ribosomal subunit.

The protein localises to the plastid. The protein resides in the chloroplast. This is Large ribosomal subunit protein uL16c from Nymphaea alba (White water-lily).